The primary structure comprises 93 residues: Small ribosomal subunit protein uS19 (93 aa).

The protein belongs to the universal ribosomal protein uS19 family.

Functionally, protein S19 forms a complex with S13 that binds strongly to the 16S ribosomal RNA. This chain is Small ribosomal subunit protein uS19, found in Leptospira interrogans serogroup Icterohaemorrhagiae serovar copenhageni (strain Fiocruz L1-130).